The following is an 851-amino-acid chain: Phosphatidate phosphatase LPIN3 (851 aa).

An N-LIP region spans residues 1–108; that stretch reads MNYVGQLAET…VPPGLCTSPI (108 aa). 2 disordered regions span residues 114-385 and 400-432; these read SGFP…YLDD and QSDSGLGARRWSEPSSQKSLRDPNPEHEPEPTL. Residues 140-151 show a composition bias toward basic residues; that stretch reads GRRKRRRRRKPK. The short motif at 141–148 is the Nuclear localization signal element; it reads RRKRRRRR. T159 bears the Phosphothreonine mark. A phosphoserine mark is found at S161, S162, and S224. A compositionally biased stretch (low complexity) spans 268 to 286; it reads GRAGATSPPRGGPSTPSTS. The segment covering 418 to 429 has biased composition (basic and acidic residues); sequence SLRDPNPEHEPE. Position 463 is a phosphoserine (S463). Basic and acidic residues predominate over residues 542–559; sequence SAQKEKTAAKEQQGEKTE. Residues 542-591 are disordered; the sequence is SAQKEKTAAKEQQGEKTEVLSSDDDAPDSPVILEIPSLPPSTPPSTPTYK. The segment covering 578-587 has biased composition (pro residues); it reads SLPPSTPPST. Residues 590-792 are C-LIP; sequence YKKSLRLSSD…RIFTVNPRGE (203 aa). The short motif at 644 to 648 is the DXDXT motif element; sequence DIDGT. Positions 655–659 match the LXXIL motif motif; it reads LGHIL.

This sequence belongs to the lipin family. Requires Mg(2+) as cofactor. In terms of tissue distribution, significant expression in intestine and other regions of the gastrointestinal tract.

The protein resides in the nucleus. It catalyses the reaction a 1,2-diacyl-sn-glycero-3-phosphate + H2O = a 1,2-diacyl-sn-glycerol + phosphate. With respect to regulation, inhibited by N-ethylmaleimide. Magnesium-dependent phosphatidate phosphatase enzyme which catalyzes the conversion of phosphatidic acid to diacylglycerol during triglyceride, phosphatidylcholine and phosphatidylethanolamine biosynthesis therefore regulates fatty acid metabolism. The protein is Phosphatidate phosphatase LPIN3 of Homo sapiens (Human).